Reading from the N-terminus, the 77-residue chain is Large ribosomal subunit protein bL31 (77 aa).

It belongs to the bacterial ribosomal protein bL31 family. Type A subfamily. As to quaternary structure, part of the 50S ribosomal subunit.

Its function is as follows. Binds the 23S rRNA. The sequence is that of Large ribosomal subunit protein bL31 from Microcystis aeruginosa (strain NIES-843 / IAM M-2473).